A 109-amino-acid polypeptide reads, in one-letter code: Hainantoxin-XVIII.2 (109 aa).

Residues 1-18 (MKLSIIIIVTSLVIAVVA) form the signal peptide. Positions 19–46 (FPSKDSKAIENDKTEQRMEIVVQETARA) are excised as a propeptide. Disulfide bonds link cysteine 47–cysteine 62, cysteine 55–cysteine 68, cysteine 59–cysteine 108, and cysteine 61–cysteine 81.

It belongs to the neurotoxin 25 family. F7 subfamily. In terms of tissue distribution, expressed by the venom gland.

Its subcellular location is the secreted. Its function is as follows. Putative ion channel inhibitor. The polypeptide is Hainantoxin-XVIII.2 (Cyriopagopus hainanus (Chinese bird spider)).